A 419-amino-acid polypeptide reads, in one-letter code: Serine--tRNA ligase (419 aa).

Residue 226 to 228 (TSE) coordinates L-serine. Residues 257–259 (RRE) and Val-273 each bind ATP. Glu-280 contacts L-serine. 344 to 347 (ELTS) lines the ATP pocket. Thr-379 serves as a coordination point for L-serine.

The protein belongs to the class-II aminoacyl-tRNA synthetase family. Type-1 seryl-tRNA synthetase subfamily. In terms of assembly, homodimer. The tRNA molecule binds across the dimer.

The protein localises to the cytoplasm. The catalysed reaction is tRNA(Ser) + L-serine + ATP = L-seryl-tRNA(Ser) + AMP + diphosphate + H(+). The enzyme catalyses tRNA(Sec) + L-serine + ATP = L-seryl-tRNA(Sec) + AMP + diphosphate + H(+). It participates in aminoacyl-tRNA biosynthesis; selenocysteinyl-tRNA(Sec) biosynthesis; L-seryl-tRNA(Sec) from L-serine and tRNA(Sec): step 1/1. Functionally, catalyzes the attachment of serine to tRNA(Ser). Is also able to aminoacylate tRNA(Sec) with serine, to form the misacylated tRNA L-seryl-tRNA(Sec), which will be further converted into selenocysteinyl-tRNA(Sec). The protein is Serine--tRNA ligase of Mycobacterium marinum (strain ATCC BAA-535 / M).